The chain runs to 490 residues: Thiamine biosynthesis bifunctional protein ThiED (490 aa).

The interval Met1–Ile213 is thiamine-phosphate synthase. 4-amino-2-methyl-5-(diphosphooxymethyl)pyrimidine contacts are provided by residues Gln50 to Lys54 and Asn82. Mg(2+) is bound by residues Asp83 and Asp102. Ser121 lines the 4-amino-2-methyl-5-(diphosphooxymethyl)pyrimidine pocket. A 2-[(2R,5Z)-2-carboxy-4-methylthiazol-5(2H)-ylidene]ethyl phosphate-binding site is contributed by Ser147–Ser149. Lys150 contributes to the 4-amino-2-methyl-5-(diphosphooxymethyl)pyrimidine binding site. Residues Gly177 and Ile197–Ser198 contribute to the 2-[(2R,5Z)-2-carboxy-4-methylthiazol-5(2H)-ylidene]ethyl phosphate site. Positions Leu229–Arg490 are hydroxymethylpyrimidine/phosphomethylpyrimidine kinase. Gln266 is a 4-amino-5-hydroxymethyl-2-methylpyrimidine binding site.

In the N-terminal section; belongs to the thiamine-phosphate synthase family. The protein in the C-terminal section; belongs to the ThiD family. Mg(2+) serves as cofactor.

It catalyses the reaction 2-[(2R,5Z)-2-carboxy-4-methylthiazol-5(2H)-ylidene]ethyl phosphate + 4-amino-2-methyl-5-(diphosphooxymethyl)pyrimidine + 2 H(+) = thiamine phosphate + CO2 + diphosphate. The catalysed reaction is 2-(2-carboxy-4-methylthiazol-5-yl)ethyl phosphate + 4-amino-2-methyl-5-(diphosphooxymethyl)pyrimidine + 2 H(+) = thiamine phosphate + CO2 + diphosphate. The enzyme catalyses 4-methyl-5-(2-phosphooxyethyl)-thiazole + 4-amino-2-methyl-5-(diphosphooxymethyl)pyrimidine + H(+) = thiamine phosphate + diphosphate. It carries out the reaction 4-amino-5-hydroxymethyl-2-methylpyrimidine + ATP = 4-amino-2-methyl-5-(phosphooxymethyl)pyrimidine + ADP + H(+). It catalyses the reaction 4-amino-2-methyl-5-(phosphooxymethyl)pyrimidine + ATP = 4-amino-2-methyl-5-(diphosphooxymethyl)pyrimidine + ADP. The protein operates within cofactor biosynthesis; thiamine diphosphate biosynthesis; 4-amino-2-methyl-5-diphosphomethylpyrimidine from 5-amino-1-(5-phospho-D-ribosyl)imidazole: step 3/3. Its pathway is cofactor biosynthesis; thiamine diphosphate biosynthesis; thiamine phosphate from 4-amino-2-methyl-5-diphosphomethylpyrimidine and 4-methyl-5-(2-phosphoethyl)-thiazole: step 1/1. Functionally, condenses 4-methyl-5-(beta-hydroxyethyl)thiazole monophosphate (THZ-P) and 2-methyl-4-amino-5-hydroxymethyl pyrimidine pyrophosphate (HMP-PP) to form thiamine monophosphate (TMP). Catalyzes the phosphorylation of hydroxymethylpyrimidine phosphate (HMP-P) to HMP-PP, and of HMP to HMP-P. This chain is Thiamine biosynthesis bifunctional protein ThiED (thiDE), found in Geobacter sulfurreducens (strain ATCC 51573 / DSM 12127 / PCA).